The chain runs to 28 residues: Glutathione S-transferase 5 (28 aa).

The GST N-terminal domain maps to 1–28; the sequence is PNYKLTYFNLRGRAEISRYLFAYAGIKY. Y7 is a glutathione binding site.

It belongs to the GST superfamily. Sigma family. As to quaternary structure, homodimer.

It localises to the cytoplasm. It catalyses the reaction RX + glutathione = an S-substituted glutathione + a halide anion + H(+). Its function is as follows. Conjugation of reduced glutathione to a wide number of exogenous and endogenous hydrophobic electrophiles. This Gallus gallus (Chicken) protein is Glutathione S-transferase 5.